Reading from the N-terminus, the 392-residue chain is Phosphoglycerate kinase (392 aa).

Substrate contacts are provided by residues D21–N23, R36, H59–R62, R113, and R146. ATP-binding positions include K197, E319, and G345–T348.

This sequence belongs to the phosphoglycerate kinase family. Monomer.

It is found in the cytoplasm. The enzyme catalyses (2R)-3-phosphoglycerate + ATP = (2R)-3-phospho-glyceroyl phosphate + ADP. Its pathway is carbohydrate degradation; glycolysis; pyruvate from D-glyceraldehyde 3-phosphate: step 2/5. The protein is Phosphoglycerate kinase of Alkalilimnicola ehrlichii (strain ATCC BAA-1101 / DSM 17681 / MLHE-1).